Consider the following 466-residue polypeptide: ATP synthase subunit beta, sodium ion specific (466 aa).

153–160 serves as a coordination point for ATP; the sequence is GGAGVGKT.

Belongs to the ATPase alpha/beta chains family. F-type ATPases have 2 components, CF(1) - the catalytic core - and CF(0) - the membrane proton channel. CF(1) has five subunits: alpha(3), beta(3), gamma(1), delta(1), epsilon(1). CF(0) has three main subunits: a, b and c.

The protein resides in the cell membrane. The catalysed reaction is 4 Na(+)(in) + ATP + H2O = 4 Na(+)(out) + ADP + phosphate + H(+). With respect to regulation, inhibited by nitrate. Produces ATP from ADP in the presence of a sodium ion gradient across the membrane. The beta chain is the catalytic subunit. This Acetobacterium woodii (strain ATCC 29683 / DSM 1030 / JCM 2381 / KCTC 1655 / WB1) protein is ATP synthase subunit beta, sodium ion specific.